Here is a 345-residue protein sequence, read N- to C-terminus: S-adenosylmethionine:tRNA ribosyltransferase-isomerase (345 aa).

The protein belongs to the QueA family. As to quaternary structure, monomer.

It is found in the cytoplasm. It carries out the reaction 7-aminomethyl-7-carbaguanosine(34) in tRNA + S-adenosyl-L-methionine = epoxyqueuosine(34) in tRNA + adenine + L-methionine + 2 H(+). It functions in the pathway tRNA modification; tRNA-queuosine biosynthesis. Functionally, transfers and isomerizes the ribose moiety from AdoMet to the 7-aminomethyl group of 7-deazaguanine (preQ1-tRNA) to give epoxyqueuosine (oQ-tRNA). This Acidithiobacillus ferrooxidans (strain ATCC 53993 / BNL-5-31) (Leptospirillum ferrooxidans (ATCC 53993)) protein is S-adenosylmethionine:tRNA ribosyltransferase-isomerase.